Here is a 2282-residue protein sequence, read N- to C-terminus: Protein Ycf2 (2282 aa).

Residue 1635 to 1642 participates in ATP binding; the sequence is GSIGTGRS.

This sequence belongs to the Ycf2 family.

The protein resides in the plastid. It localises to the chloroplast stroma. In terms of biological role, probable ATPase of unknown function. Its presence in a non-photosynthetic plant (Epifagus virginiana) and experiments in tobacco indicate that it has an essential function which is probably not related to photosynthesis. In Populus alba (White poplar), this protein is Protein Ycf2.